A 277-amino-acid polypeptide reads, in one-letter code: Large ribosomal subunit protein uL2 (277 aa).

2 disordered regions span residues 37 to 60 (KNSTAGRNNNGHITTRHKGGGHKH) and 223 to 264 (VVMN…NKRT). Over residues 39 to 49 (STAGRNNNGHI) the composition is skewed to polar residues. Basic residues predominate over residues 50–60 (TTRHKGGGHKH). A compositionally biased stretch (basic and acidic residues) spans 229–244 (DHPHGGGEGRTGEARE).

It belongs to the universal ribosomal protein uL2 family. In terms of assembly, part of the 50S ribosomal subunit. Forms a bridge to the 30S subunit in the 70S ribosome.

In terms of biological role, one of the primary rRNA binding proteins. Required for association of the 30S and 50S subunits to form the 70S ribosome, for tRNA binding and peptide bond formation. It has been suggested to have peptidyltransferase activity; this is somewhat controversial. Makes several contacts with the 16S rRNA in the 70S ribosome. The polypeptide is Large ribosomal subunit protein uL2 (Neisseria gonorrhoeae (strain ATCC 700825 / FA 1090)).